The sequence spans 736 residues: 3',5'-cyclic-AMP phosphodiesterase 4B (736 aa).

Disordered regions lie at residues 51-78, 189-209, and 282-301; these read QLPP…TTLP, LHGT…SRVN, and KQND…KKKK. A Phosphoserine modification is found at serine 290. Residues 330–659 enclose the PDEase domain; that stretch reads VNTENEDHLA…NWYQSMIPQS (330 aa). Histidine 406 functions as the Proton donor in the catalytic mechanism. Histidine 406 serves as a coordination point for 3',5'-cyclic AMP. AMP is bound by residues histidine 406 and histidine 410. Residues histidine 410, histidine 446, aspartate 447, and aspartate 564 each coordinate Zn(2+). Residues aspartate 447, aspartate 564, glutamine 615, and phenylalanine 618 each coordinate AMP. Mg(2+) is bound at residue aspartate 447. Aspartate 447 serves as a coordination point for Mn(2+). The 3',5'-cyclic AMP site is built by glutamine 615 and phenylalanine 618. 2 positions are modified to phosphoserine: serine 659 and serine 661. Positions 685-736 are disordered; that stretch reads DEEDSEGPEKEGEGHSYFSSTKTLCVIDPENRDSLGETDIDIATEDKSPVDT.

This sequence belongs to the cyclic nucleotide phosphodiesterase family. PDE4 subfamily. As to quaternary structure, interacts with DISC1. It depends on Zn(2+) as a cofactor. Mg(2+) is required as a cofactor. Mn(2+) serves as cofactor. Expressed in brain, heart, lung and skeletal muscle. Expressed in white blood cells. As to expression, brain-specific isoform.

It localises to the cytoplasm. The protein localises to the cell membrane. The catalysed reaction is 3',5'-cyclic AMP + H2O = AMP + H(+). Its pathway is purine metabolism; 3',5'-cyclic AMP degradation; AMP from 3',5'-cyclic AMP: step 1/1. Inhibited by rolipram. In terms of biological role, hydrolyzes the second messenger cAMP, which is a key regulator of many important physiological processes. May be involved in mediating central nervous system effects of therapeutic agents ranging from antidepressants to antiasthmatic and anti-inflammatory agents. The polypeptide is 3',5'-cyclic-AMP phosphodiesterase 4B (Homo sapiens (Human)).